A 210-amino-acid chain; its full sequence is 7-methyl-GTP pyrophosphatase (210 aa).

The active-site Proton acceptor is Asp79.

It belongs to the Maf family. YceF subfamily. The cofactor is a divalent metal cation.

Its subcellular location is the cytoplasm. The enzyme catalyses N(7)-methyl-GTP + H2O = N(7)-methyl-GMP + diphosphate + H(+). Functionally, nucleoside triphosphate pyrophosphatase that hydrolyzes 7-methyl-GTP (m(7)GTP). May have a dual role in cell division arrest and in preventing the incorporation of modified nucleotides into cellular nucleic acids. The sequence is that of 7-methyl-GTP pyrophosphatase from Burkholderia orbicola (strain AU 1054).